A 559-amino-acid chain; its full sequence is Germacrene A synthase 1 (559 aa).

Asp-312, Asp-316, Asp-456, Thr-460, and Glu-464 together coordinate Mg(2+). Residues 312–316 (DDTYD) carry the DDXXD motif motif.

This sequence belongs to the terpene synthase family. Monomer. Mg(2+) serves as cofactor. Mainly expressed in sunflower trichomes.

The enzyme catalyses (2E,6E)-farnesyl diphosphate = (+)-(R)-germacrene A + diphosphate. The protein operates within secondary metabolite biosynthesis; terpenoid biosynthesis. Its function is as follows. Sesquiterpene synthase involved in germacrene A biosynthesis. Germacrene A is a precursor of several sesquiterpene lactones. This chain is Germacrene A synthase 1, found in Helianthus annuus (Common sunflower).